We begin with the raw amino-acid sequence, 103 residues long: Large ribosomal subunit protein bL21 (103 aa).

This sequence belongs to the bacterial ribosomal protein bL21 family. In terms of assembly, part of the 50S ribosomal subunit. Contacts protein L20.

This protein binds to 23S rRNA in the presence of protein L20. The chain is Large ribosomal subunit protein bL21 from Acinetobacter baylyi (strain ATCC 33305 / BD413 / ADP1).